We begin with the raw amino-acid sequence, 427 residues long: Serine hydroxymethyltransferase (427 aa).

120–122 (GHI) serves as a coordination point for (6S)-5,6,7,8-tetrahydrofolate. Lysine 226 carries the N6-(pyridoxal phosphate)lysine modification.

It belongs to the SHMT family. As to quaternary structure, homodimer. Pyridoxal 5'-phosphate is required as a cofactor.

The protein localises to the cytoplasm. It functions in the pathway amino-acid biosynthesis; glycine biosynthesis; glycine from L-serine: step 1/1. In terms of biological role, catalyzes the reversible interconversion of serine and glycine with a modified folate serving as the one-carbon carrier. Also exhibits a pteridine-independent aldolase activity toward beta-hydroxyamino acids, producing glycine and aldehydes, via a retro-aldol mechanism. The sequence is that of Serine hydroxymethyltransferase from Pyrococcus horikoshii (strain ATCC 700860 / DSM 12428 / JCM 9974 / NBRC 100139 / OT-3).